The primary structure comprises 487 residues: (S)-N-methylcoclaurine 3'-hydroxylase isozyme 1 (487 aa).

Residues 4-24 (TVALIAVIISSILYLLFGGSG) form a helical membrane-spanning segment. Cysteine 429 lines the heme pocket.

This sequence belongs to the cytochrome P450 family. The cofactor is heme.

Its subcellular location is the endoplasmic reticulum membrane. The protein localises to the microsome membrane. It catalyses the reaction (S)-N-methylcoclaurine + reduced [NADPH--hemoprotein reductase] + O2 = (S)-3'-hydroxy-N-methylcoclaurine + oxidized [NADPH--hemoprotein reductase] + H2O + H(+). The protein operates within alkaloid biosynthesis; (S)-reticuline biosynthesis; (S)-reticuline from (S)-norcoclaurine: step 3/4. 3'-hydroxylation of (S)-N-methylcoclaurine. The sequence is that of (S)-N-methylcoclaurine 3'-hydroxylase isozyme 1 (CYP80B1) from Eschscholzia californica (California poppy).